A 588-amino-acid chain; its full sequence is L-fucose isomerase (588 aa).

Active-site proton acceptor residues include Glu-335 and Asp-359. Residues Glu-335, Asp-359, and His-525 each contribute to the Mn(2+) site.

Belongs to the L-fucose isomerase family. Requires Mn(2+) as cofactor.

It is found in the cytoplasm. The catalysed reaction is L-fucose = L-fuculose. It functions in the pathway carbohydrate degradation; L-fucose degradation; L-lactaldehyde and glycerone phosphate from L-fucose: step 1/3. Functionally, converts the aldose L-fucose into the corresponding ketose L-fuculose. The chain is L-fucose isomerase from Streptococcus pneumoniae serotype 2 (strain D39 / NCTC 7466).